The sequence spans 849 residues: Glycogen phosphorylase (849 aa).

At K679 the chain carries N6-(pyridoxal phosphate)lysine.

The protein belongs to the glycogen phosphorylase family. The cofactor is pyridoxal 5'-phosphate.

The enzyme catalyses [(1-&gt;4)-alpha-D-glucosyl](n) + phosphate = [(1-&gt;4)-alpha-D-glucosyl](n-1) + alpha-D-glucose 1-phosphate. Functionally, phosphorylase is an important allosteric enzyme in carbohydrate metabolism. Enzymes from different sources differ in their regulatory mechanisms and in their natural substrates. However, all known phosphorylases share catalytic and structural properties. The sequence is that of Glycogen phosphorylase (glgP) from Synechocystis sp. (strain ATCC 27184 / PCC 6803 / Kazusa).